The following is a 585-amino-acid chain: Proline--tRNA ligase (585 aa).

This sequence belongs to the class-II aminoacyl-tRNA synthetase family. ProS type 1 subfamily. As to quaternary structure, homodimer.

The protein localises to the cytoplasm. The catalysed reaction is tRNA(Pro) + L-proline + ATP = L-prolyl-tRNA(Pro) + AMP + diphosphate. Its function is as follows. Catalyzes the attachment of proline to tRNA(Pro) in a two-step reaction: proline is first activated by ATP to form Pro-AMP and then transferred to the acceptor end of tRNA(Pro). As ProRS can inadvertently accommodate and process non-cognate amino acids such as alanine and cysteine, to avoid such errors it has two additional distinct editing activities against alanine. One activity is designated as 'pretransfer' editing and involves the tRNA(Pro)-independent hydrolysis of activated Ala-AMP. The other activity is designated 'posttransfer' editing and involves deacylation of mischarged Ala-tRNA(Pro). The misacylated Cys-tRNA(Pro) is not edited by ProRS. The polypeptide is Proline--tRNA ligase (Nocardia farcinica (strain IFM 10152)).